A 57-amino-acid polypeptide reads, in one-letter code: Small ribosomal subunit protein bS21 (57 aa).

The interval 35–57 is disordered; it reads REFYEKPSVRRKKKSEAARKRKY. Positions 43–57 are enriched in basic residues; it reads VRRKKKSEAARKRKY.

This sequence belongs to the bacterial ribosomal protein bS21 family.

This is Small ribosomal subunit protein bS21 from Bacillus licheniformis (strain ATCC 14580 / DSM 13 / JCM 2505 / CCUG 7422 / NBRC 12200 / NCIMB 9375 / NCTC 10341 / NRRL NRS-1264 / Gibson 46).